A 603-amino-acid polypeptide reads, in one-letter code: Penicillin-binding protein activator LpoA (603 aa).

Positions 1-24 (MINHKRLSVPRILTPVALAITLAA) are cleaved as a signal peptide. Residue Cys25 is the site of N-palmitoyl cysteine attachment. Cys25 carries S-diacylglycerol cysteine lipidation.

The protein belongs to the LpoA family. Interacts with PBP1a.

It is found in the cell outer membrane. Functionally, regulator of peptidoglycan synthesis that is essential for the function of penicillin-binding protein 1A (PBP1a). This chain is Penicillin-binding protein activator LpoA, found in Vibrio antiquarius (strain Ex25).